Consider the following 519-residue polypeptide: MIENQVPFYLLIFLVGIGLGVLTFWAYHRFALGGFKRISKDIISRAEQETSELRKTNELSLKQKQVEYQRELEQMWQQERKKLQQEEERLKQREDKLESRMNLVEKKLSDTEKREAILIGRKAQLDEEKKQTIESHSKLLSILEKASGLTSSEAKEILLSRLSNEVKTESANLIRRIRKEAEEEAEKIASTIIATSINRLAVSCASESTVCTVTIPNEDMKGRIIGREGRNIRALERETGVNFIIDDTPGAVVLSGFDPVRKHIAKMALTELVQDGRIHPTRIEEVVEKATINVHKQIKQYGEDAALRAGAMNLHPDLINLLGKLKFRFSYGQNVLDHSLEVSHLMGLMAAELGLDIRLAKRIGLLHDLGKAVTHEIEGSHAIIGHDLALKLGENKEVANGIGCHHHEMAPLTIEADLCSAADAISASREGARIEAVEEYIKRLRKLEEIALEFAGVDKAYAMQAGREIRIVVLPDQVDDAGVVNLARDLTKRIEQELSYPGKIKVTVIREKRVVEYAV.

The helical transmembrane segment at Val6–Ala26 threads the bilayer. Residues Thr209–Leu272 form the KH domain. An HD domain is found at Val335 to Ser428.

The protein belongs to the RNase Y family.

Its subcellular location is the cell membrane. Its function is as follows. Endoribonuclease that initiates mRNA decay. The chain is Ribonuclease Y from Protochlamydia amoebophila (strain UWE25).